The primary structure comprises 318 residues: Isoflavone reductase (318 aa).

Residues 11 to 17 (GATGAIG), R36, and K44 contribute to the NADP(+) site. Residue K144 is the Proton acceptor of the active site. R148 serves as a coordination point for NADP(+).

The protein belongs to the NmrA-type oxidoreductase family. Isoflavone reductase subfamily.

It catalyses the reaction (3R)-vestitone + NADP(+) = 2'-hydroxyformononetin + NADPH + 2 H(+). Its pathway is phytoalexin biosynthesis; pterocarpan phytoalexin biosynthesis. Functionally, reduces achiral isoflavones to chiral isoflavanones during the biosynthesis of chiral pterocarpan phytoalexins. The reduction product (sophrol) is a third isomer, which represents the penultimate intermediate in the synthesis of the phytoalexin (+)-pisatin, the major phytoalexin in pea. The protein is Isoflavone reductase (IFR) of Pisum sativum (Garden pea).